A 107-amino-acid chain; its full sequence is Sulmotoxin 1 (107 aa).

The N-terminal stretch at 1 to 19 is a signal peptide; the sequence is MKTLLLALAVVVLVCLGSA. The propeptide occupies 20 to 34; it reads NELGLGRQRVDRRRR. Disulfide bonds link cysteine 44-cysteine 68, cysteine 47-cysteine 55, cysteine 61-cysteine 83, cysteine 87-cysteine 98, and cysteine 99-cysteine 104.

This sequence belongs to the three-finger toxin family. Ancestral subfamily. Boigatoxin sub-subfamily. Monomer. Expressed by the venom gland.

Its subcellular location is the secreted. Its function is as follows. Mammal-specific neurotoxin (tested on mice). Not toxic to lizards (tested on geckos). The sequence is that of Sulmotoxin 1 from Spilotes sulphureus (Amazon puffing snake).